Consider the following 442-residue polypeptide: 6-phospho-alpha-glucosidase 1 (442 aa).

Position 6–72 (6–72) interacts with NAD(+); the sequence is FSVLIAGGGS…PEVEFLATTD (67 aa). Substrate-binding residues include Arg-95 and Asn-149. Cys-171 contacts Mn(2+). The active-site Proton donor is the Asp-172. His-202 lines the Mn(2+) pocket. Tyr-265 (proton acceptor) is an active-site residue. Arg-285 is a binding site for substrate.

It belongs to the glycosyl hydrolase 4 family. Homodimer. May also form homotetramer. Mn(2+) is required as a cofactor. Co(2+) serves as cofactor. The cofactor is Ni(2+). It depends on Fe(2+) as a cofactor. Requires Mg(2+) as cofactor. NAD(+) is required as a cofactor.

It carries out the reaction alpha-maltose 6'-phosphate + H2O = D-glucose 6-phosphate + D-glucose. Its activity is regulated as follows. Is inhibited by EDTA in vitro. Its function is as follows. Is probably involved in the catabolism of alpha-glycosides accumulated via a phosphoenolpyruvate-dependent phosphotransferase system (PEP-PTS). Hydrolyzes a wide variety of 6-phospho-alpha-D-glucosides including the five isomeric derivatives of sucrose, i.e. trehalulose-6'-phosphate, turanose-6'-phosphate, maltulose-6'-phosphate, leucrose-6'-phosphate, and palatinose-6'-phosphate, but is not active on sucrose-6-phosphate. Can also hydrolyze maltose-6'-phosphate and methyl-alpha-glucose-6-phosphate, and poorly, trehalose-6-phosphate. Fails to hydrolyze beta-O-linked phosphorylated disaccharides such as cellobiose-6'-phosphate and gentiobiose-6'-phosphate. Does not seem to be involved in maltose catabolism. This chain is 6-phospho-alpha-glucosidase 1 (simA), found in Lacticaseibacillus paracasei (strain ATCC 334 / BCRC 17002 / CCUG 31169 / CIP 107868 / KCTC 3260 / NRRL B-441) (Lactobacillus paracasei).